The chain runs to 145 residues: Mannitol-specific phosphotransferase enzyme IIA component (145 aa).

The region spanning 4–143 (TILSTETIKV…QEVLAFLGEV (140 aa)) is the PTS EIIA type-2 domain. Catalysis depends on H64, which acts as the Tele-phosphohistidine intermediate. H64 bears the Phosphohistidine; by HPr mark.

Its subcellular location is the cytoplasm. Functionally, the phosphoenolpyruvate-dependent sugar phosphotransferase system (sugar PTS), a major carbohydrate active transport system, catalyzes the phosphorylation of incoming sugar substrates concomitantly with their translocation across the cell membrane. The enzyme II CmtAB PTS system is involved in D-mannitol transport. This chain is Mannitol-specific phosphotransferase enzyme IIA component (mtlF), found in Halalkalibacterium halodurans (strain ATCC BAA-125 / DSM 18197 / FERM 7344 / JCM 9153 / C-125) (Bacillus halodurans).